Consider the following 1399-residue polypeptide: DNA-directed RNA polymerase subunit beta' (1399 aa).

Residues C70, C72, C85, and C88 each coordinate Zn(2+). D460, D462, and D464 together coordinate Mg(2+). Residues C814, C888, C895, and C898 each contribute to the Zn(2+) site.

Belongs to the RNA polymerase beta' chain family. As to quaternary structure, the RNAP catalytic core consists of 2 alpha, 1 beta, 1 beta' and 1 omega subunit. When a sigma factor is associated with the core the holoenzyme is formed, which can initiate transcription. The cofactor is Mg(2+). Zn(2+) serves as cofactor.

It catalyses the reaction RNA(n) + a ribonucleoside 5'-triphosphate = RNA(n+1) + diphosphate. DNA-dependent RNA polymerase catalyzes the transcription of DNA into RNA using the four ribonucleoside triphosphates as substrates. The polypeptide is DNA-directed RNA polymerase subunit beta' (Pseudomonas putida (strain ATCC 700007 / DSM 6899 / JCM 31910 / BCRC 17059 / LMG 24140 / F1)).